A 190-amino-acid polypeptide reads, in one-letter code: Protein GrpE (190 aa).

The segment covering methionine 1–proline 11 has biased composition (polar residues). The segment at methionine 1–alanine 36 is disordered. A compositionally biased stretch (acidic residues) spans glutamate 13–serine 28.

The protein belongs to the GrpE family. As to quaternary structure, homodimer.

It is found in the cytoplasm. Its function is as follows. Participates actively in the response to hyperosmotic and heat shock by preventing the aggregation of stress-denatured proteins, in association with DnaK and GrpE. It is the nucleotide exchange factor for DnaK and may function as a thermosensor. Unfolded proteins bind initially to DnaJ; upon interaction with the DnaJ-bound protein, DnaK hydrolyzes its bound ATP, resulting in the formation of a stable complex. GrpE releases ADP from DnaK; ATP binding to DnaK triggers the release of the substrate protein, thus completing the reaction cycle. Several rounds of ATP-dependent interactions between DnaJ, DnaK and GrpE are required for fully efficient folding. This is Protein GrpE from Teredinibacter turnerae (strain ATCC 39867 / T7901).